A 170-amino-acid chain; its full sequence is UPF0260 protein RPB_3505 (170 aa).

It belongs to the UPF0260 family.

The chain is UPF0260 protein RPB_3505 from Rhodopseudomonas palustris (strain HaA2).